The primary structure comprises 194 residues: Large ribosomal subunit protein uL18 (194 aa).

This sequence belongs to the universal ribosomal protein uL18 family. Part of the 50S ribosomal subunit. Contacts the 5S and 23S rRNAs.

This is one of the proteins that bind and probably mediate the attachment of the 5S RNA into the large ribosomal subunit, where it forms part of the central protuberance. The sequence is that of Large ribosomal subunit protein uL18 from Methanococcus aeolicus (strain ATCC BAA-1280 / DSM 17508 / OCM 812 / Nankai-3).